We begin with the raw amino-acid sequence, 374 residues long: Chaperone protein DnaJ (374 aa).

The 66-residue stretch at 5-70 folds into the J domain; the sequence is DYYEVLGVSK…QKRAAYDQYG (66 aa). A CR-type zinc finger spans residues 132 to 210; sequence GTTVKIRVPT…CHGHGRVEET (79 aa). Positions 145, 148, 162, 165, 184, 187, 198, and 201 each coordinate Zn(2+). 4 CXXCXGXG motif repeats span residues 145 to 152, 162 to 169, 184 to 191, and 198 to 205; these read CKPCGGSG, CTTCGGHG, CPNCRGQG, and CKECHGHG.

Belongs to the DnaJ family. In terms of assembly, homodimer. Zn(2+) serves as cofactor.

The protein resides in the cytoplasm. Functionally, participates actively in the response to hyperosmotic and heat shock by preventing the aggregation of stress-denatured proteins and by disaggregating proteins, also in an autonomous, DnaK-independent fashion. Unfolded proteins bind initially to DnaJ; upon interaction with the DnaJ-bound protein, DnaK hydrolyzes its bound ATP, resulting in the formation of a stable complex. GrpE releases ADP from DnaK; ATP binding to DnaK triggers the release of the substrate protein, thus completing the reaction cycle. Several rounds of ATP-dependent interactions between DnaJ, DnaK and GrpE are required for fully efficient folding. Also involved, together with DnaK and GrpE, in the DNA replication of plasmids through activation of initiation proteins. The protein is Chaperone protein DnaJ of Saccharophagus degradans (strain 2-40 / ATCC 43961 / DSM 17024).